The sequence spans 430 residues: Tektin-2 (430 aa).

Coiled-coil stretches lie at residues 75–162 and 226–380; these read KEML…FQHL and KNRA…IACK.

This sequence belongs to the tektin family. In terms of assembly, microtubule inner protein component of sperm flagellar doublet microtubules. May interact with CCDC172. Post-translationally, tyrosine phosphorylated. In terms of processing, ubiquitinated, leading to its degradation. Deubiquitinated by USP16, promoting its stability.

It localises to the cytoplasm. It is found in the cytoskeleton. Its subcellular location is the cilium axoneme. The protein localises to the flagellum axoneme. The protein resides in the microtubule organizing center. In terms of biological role, microtubule inner protein (MIP) part of the dynein-decorated doublet microtubules (DMTs) in cilia and flagellar axoneme. Plays a key role in the assembly or attachment of the inner dynein arm to microtubules in sperm flagella and tracheal cilia. Forms filamentous polymers in the walls of ciliary and flagellar microtubules. This is Tektin-2 (Tekt2) from Rattus norvegicus (Rat).